The sequence spans 415 residues: WD repeat and FYVE domain-containing protein 2 (415 aa).

WD repeat units follow at residues 71 to 103 (HHFM…YEFS), 119 to 148 (CHAG…IVWH), 202 to 232 (AHTN…IMWD), and 245 to 284 (GHNG…VETP). The FYVE-type zinc finger occupies 286–357 (WKTSDCCQKC…ICNDCNARMK (72 aa)). Positions 292, 295, 319, 322, 327, 330, 349, and 352 each coordinate Zn(2+). Residues 373-403 (EIHTGITAMHLQETLGLLVTSGQNRVIMIWD) form a WD 5 repeat.

Its function is as follows. Plays a role in coelomocyte endocytosis. This chain is WD repeat and FYVE domain-containing protein 2 (wdfy-2), found in Caenorhabditis elegans.